The sequence spans 482 residues: GTPase Der (482 aa).

EngA-type G domains follow at residues 3-166 and 195-368; these read PVVA…SEQF and IKLA…NSAT. Residues 9–16, 56–60, 118–121, 201–208, 248–252, and 313–316 contribute to the GTP site; these read GRPNVGKS, DTGGI, NKVD, GKPNVGKS, DTAGV, and NKWD. Positions 369-453 constitute a KH-like domain; sequence KRINTSMLTR…PIKVEFREGA (85 aa).

The protein belongs to the TRAFAC class TrmE-Era-EngA-EngB-Septin-like GTPase superfamily. EngA (Der) GTPase family. Associates with the 50S ribosomal subunit.

GTPase that plays an essential role in the late steps of ribosome biogenesis. The polypeptide is GTPase Der (Pseudoalteromonas atlantica (strain T6c / ATCC BAA-1087)).